Consider the following 271-residue polypeptide: 3-methyl-2-oxobutanoate hydroxymethyltransferase (271 aa).

Residues Asp53 and Asp92 each contribute to the Mg(2+) site. 3-methyl-2-oxobutanoate is bound by residues 53-54 (DS), Asp92, and Lys120. Glu122 serves as a coordination point for Mg(2+). Catalysis depends on Glu189, which acts as the Proton acceptor.

This sequence belongs to the PanB family. Homodecamer; pentamer of dimers. Mg(2+) is required as a cofactor.

The protein resides in the cytoplasm. The catalysed reaction is 3-methyl-2-oxobutanoate + (6R)-5,10-methylene-5,6,7,8-tetrahydrofolate + H2O = 2-dehydropantoate + (6S)-5,6,7,8-tetrahydrofolate. It participates in cofactor biosynthesis; (R)-pantothenate biosynthesis; (R)-pantoate from 3-methyl-2-oxobutanoate: step 1/2. Catalyzes the reversible reaction in which hydroxymethyl group from 5,10-methylenetetrahydrofolate is transferred onto alpha-ketoisovalerate to form ketopantoate. The chain is 3-methyl-2-oxobutanoate hydroxymethyltransferase from Burkholderia multivorans (strain ATCC 17616 / 249).